The following is a 418-amino-acid chain: Nucleoredoxin (418 aa).

The 201-residue stretch at 109-309 (KYKVTSIPSL…ESNAVQLHEG (201 aa)) folds into the Thioredoxin domain.

This sequence belongs to the nucleoredoxin family.

The protein resides in the cytoplasm. It localises to the cytosol. Its subcellular location is the nucleus. It carries out the reaction [protein]-dithiol + NAD(+) = [protein]-disulfide + NADH + H(+). It catalyses the reaction [protein]-dithiol + NADP(+) = [protein]-disulfide + NADPH + H(+). Functionally, functions as a redox-dependent negative regulator of the Wnt signaling pathway. The chain is Nucleoredoxin (nxn) from Danio rerio (Zebrafish).